Reading from the N-terminus, the 323-residue chain is MATEGLAGALATVLGGKGLLVQSCDSEPAGKPLFPVRLRKNVCYVVLAVFLNEQDEVLMIQEAKRECRGTWYLPAGRMEPGETIVEAMQREVKEEAGLLCEPVTLLSVEERGASWIRFVFLARPTGGVLKTSKDADSESLQAGWYPRVSLPTPLRAHDVLHLVELGAKFCQQAMHPLILPQELPCSVVCQRLVTTFTTVQSVWVLVGTVGTPHLPITACGFTPMEQRGGIKVAILRLLQECLTLHSLAVETKGLLGLQHLGRDHVDGVCLNVLVTVAFRNPGIQDEPPKIRGENYFWWKVLEEDLQKLLLYRLQESSVIPLSR.

The 131-residue stretch at 37-167 (RLRKNVCYVV…DVLHLVELGA (131 aa)) folds into the Nudix hydrolase domain. Residue L58 coordinates Mg(2+). Residues 76 to 97 (GRMEPGETIVEAMQREVKEEAG) carry the Nudix box motif.

It belongs to the Nudix hydrolase family. Requires Mn(2+) as cofactor. The cofactor is Mg(2+).

It carries out the reaction 8-oxo-dGDP + H2O = 8-oxo-dGMP + phosphate + H(+). It catalyses the reaction 8-oxo-dADP + H2O = 8-oxo-dAMP + phosphate + H(+). The enzyme catalyses 2-oxo-dADP + H2O = 2-oxo-dAMP + phosphate + H(+). The catalysed reaction is 8-oxo-GDP + H2O = 8-oxo-GMP + phosphate + H(+). Functionally, mediates the hydrolysis of oxidized nucleoside diphosphate derivatives. Hydrolyzes 8-oxo-7,8-dihydroguanine (8-oxo-Gua)-containing deoxyribo- and ribonucleoside diphosphates to the monophosphates. Hydrolyzes 8-oxo-dGDP and 8-oxo-GDP with the same efficiencies. Also hydrolyzes 8-OH-dADP and 2-OH-dADP. Exhibited no or minimal hydrolysis activity against 8-oxo-dGTP, 8-oxo-GTP, dGTP, GTP, dGDP and GDP. Probably removes oxidized guanine nucleotides from both the DNA and RNA precursor pools. The polypeptide is 8-oxo-dGDP phosphatase NUDT18 (Mus musculus (Mouse)).